Consider the following 157-residue polypeptide: Transcription elongation factor GreA (157 aa).

A coiled-coil region spans residues 46–67 (AEYHAARERQSFIEGRIKELED).

It belongs to the GreA/GreB family.

Functionally, necessary for efficient RNA polymerase transcription elongation past template-encoded arresting sites. The arresting sites in DNA have the property of trapping a certain fraction of elongating RNA polymerases that pass through, resulting in locked ternary complexes. Cleavage of the nascent transcript by cleavage factors such as GreA or GreB allows the resumption of elongation from the new 3'terminus. GreA releases sequences of 2 to 3 nucleotides. In Rhodospirillum rubrum (strain ATCC 11170 / ATH 1.1.1 / DSM 467 / LMG 4362 / NCIMB 8255 / S1), this protein is Transcription elongation factor GreA.